The chain runs to 185 residues: Elongation factor P (185 aa).

Belongs to the elongation factor P family.

The protein resides in the cytoplasm. It functions in the pathway protein biosynthesis; polypeptide chain elongation. In terms of biological role, involved in peptide bond synthesis. Stimulates efficient translation and peptide-bond synthesis on native or reconstituted 70S ribosomes in vitro. Probably functions indirectly by altering the affinity of the ribosome for aminoacyl-tRNA, thus increasing their reactivity as acceptors for peptidyl transferase. The chain is Elongation factor P from Clostridium novyi (strain NT).